Consider the following 193-residue polypeptide: Peptidyl-tRNA hydrolase (193 aa).

Tyrosine 21 provides a ligand contact to tRNA. Histidine 26 (proton acceptor) is an active-site residue. Residues tyrosine 72, asparagine 74, and asparagine 120 each coordinate tRNA.

Belongs to the PTH family. As to quaternary structure, monomer.

The protein localises to the cytoplasm. It carries out the reaction an N-acyl-L-alpha-aminoacyl-tRNA + H2O = an N-acyl-L-amino acid + a tRNA + H(+). Its function is as follows. Hydrolyzes ribosome-free peptidyl-tRNAs (with 1 or more amino acids incorporated), which drop off the ribosome during protein synthesis, or as a result of ribosome stalling. Catalyzes the release of premature peptidyl moieties from peptidyl-tRNA molecules trapped in stalled 50S ribosomal subunits, and thus maintains levels of free tRNAs and 50S ribosomes. This chain is Peptidyl-tRNA hydrolase, found in Nocardia farcinica (strain IFM 10152).